The primary structure comprises 58 residues: Potassium channel toxin Ts16 (58 aa).

A signal peptide spans 1-16 (MHSSVFILILFSLAVI). 3 disulfides stabilise this stretch: Cys-29/Cys-51, Cys-34/Cys-47, and Cys-38/Cys-53.

Expressed by the venom gland.

The protein localises to the secreted. Its function is as follows. Blocks potassium channels. This is Potassium channel toxin Ts16 from Tityus serrulatus (Brazilian scorpion).